Consider the following 296-residue polypeptide: Sulfotransferase 1C2 (296 aa).

Residue 49–54 participates in 3'-phosphoadenylyl sulfate binding; the sequence is KAGTTW. 107-109 provides a ligand contact to substrate; it reads KTH. His109 acts as the Proton acceptor in catalysis. Residues Arg131, Ser139, Tyr194, and 228–233 contribute to the 3'-phosphoadenylyl sulfate site; that span reads TSFEKM. Ser139 carries the post-translational modification Phosphoserine. Ser254 carries the phosphoserine modification. 256-260 contacts 3'-phosphoadenylyl sulfate; sequence FMRKG.

The protein belongs to the sulfotransferase 1 family. Found in adult stomach, kidney and thyroid gland, and in fetal kidney and liver.

The protein localises to the cytoplasm. It localises to the lysosome. It is found in the mitochondrion. The enzyme catalyses a phenol + 3'-phosphoadenylyl sulfate = an aryl sulfate + adenosine 3',5'-bisphosphate + H(+). The catalysed reaction is cholesterol + 3'-phosphoadenylyl sulfate = cholesterol sulfate + adenosine 3',5'-bisphosphate + H(+). Functionally, sulfotransferase that utilizes 3'-phospho-5'-adenylyl sulfate (PAPS) to catalyze the sulfate conjugation of phenolic compounds. Does not transfer sulfate to steroids, dopamine, acetaminophen, or alpha-naphthol. Except in mitochondria, where it can add sulfate to cholesterol producing cholesterol sulfate, which alters mitochondrial membrane organization, and impacts protein complex mobility increasing state-III respiration, thereby modulating mitochondrial respiration. Catalyzes the sulfation of the carcinogenic N-hydroxy-2-acetylaminofluorene leading to highly reactive intermediates capable of forming DNA adducts, potentially resulting in mutagenesis. In Homo sapiens (Human), this protein is Sulfotransferase 1C2 (SULT1C2).